The following is a 74-amino-acid chain: High-potential iron-sulfur protein (74 aa).

The [4Fe-4S] cluster site is built by C36, C39, C53, and C67.

The protein belongs to the high-potential iron-sulfur protein (HiPIP) family. As to quaternary structure, homodimer.

Its function is as follows. Specific class of high-redox-potential 4Fe-4S ferredoxins. Functions in anaerobic electron transport in most purple and in some other photosynthetic bacteria and in at least one genus (Paracoccus) of halophilic, denitrifying bacteria. In Rubrivivax gelatinosus (Rhodocyclus gelatinosus), this protein is High-potential iron-sulfur protein (hip).